The chain runs to 235 residues: Large ribosomal subunit protein uL1 (235 aa).

The protein belongs to the universal ribosomal protein uL1 family. In terms of assembly, part of the 50S ribosomal subunit.

Functionally, binds directly to 23S rRNA. The L1 stalk is quite mobile in the ribosome, and is involved in E site tRNA release. Its function is as follows. Protein L1 is also a translational repressor protein, it controls the translation of the L11 operon by binding to its mRNA. The protein is Large ribosomal subunit protein uL1 of Micrococcus luteus (strain ATCC 4698 / DSM 20030 / JCM 1464 / CCM 169 / CCUG 5858 / IAM 1056 / NBRC 3333 / NCIMB 9278 / NCTC 2665 / VKM Ac-2230) (Micrococcus lysodeikticus).